A 405-amino-acid chain; its full sequence is Aspartokinase (405 aa).

7–10 (KYGG) is an ATP binding site. Substrate is bound at residue 25-30 (RIAHYR). ATP is bound at residue Ser41. Substrate-binding positions include 47–49 (TDE), Glu74, 125–126 (LD), 150–153 (RGGS), and Ser153. ATP is bound by residues 173-174 (TD), 179-184 (YTTDPH), and Arg209. 2 consecutive ACT domains span residues 263–342 (IGLI…IAKV) and 344–405 (IVGV…LDKA). Residues Asp270, 274–275 (IA), 288–290 (AVD), Gln294, 355–356 (VP), 369–370 (NI), and 376–377 (SE) contribute to the substrate site.

Belongs to the aspartokinase family. Heterotetramer consisting of 2 isoforms Alpha (catalytic and regulation) and of a homodimer of 2 isoforms Beta (regulation and thermostability).

The enzyme catalyses L-aspartate + ATP = 4-phospho-L-aspartate + ADP. Its pathway is amino-acid biosynthesis; L-lysine biosynthesis via DAP pathway; (S)-tetrahydrodipicolinate from L-aspartate: step 1/4. It participates in amino-acid biosynthesis; L-methionine biosynthesis via de novo pathway; L-homoserine from L-aspartate: step 1/3. It functions in the pathway amino-acid biosynthesis; L-threonine biosynthesis; L-threonine from L-aspartate: step 1/5. Its activity is regulated as follows. Inhibited by threonine. Catalyzes the phosphorylation of the beta-carboxyl group of aspartic acid with ATP to yield 4-phospho-L-aspartate, which is involved in the branched biosynthetic pathway leading to the biosynthesis of amino acids threonine, isoleucine and methionine. The polypeptide is Aspartokinase (ask) (Thermus thermophilus).